Reading from the N-terminus, the 274-residue chain is Undecaprenyl-diphosphatase (274 aa).

A run of 7 helical transmembrane segments spans residues 21–39, 44–64, 85–105, 109–129, 185–205, 214–234, and 247–267; these read FLPI…LLGF, AQVF…LVYW, FNLA…GKAI, LFTP…ILWA, ATDF…VYSL, VADL…AWLC, and FVPF…TAST.

The protein belongs to the UppP family.

It localises to the cell inner membrane. The enzyme catalyses di-trans,octa-cis-undecaprenyl diphosphate + H2O = di-trans,octa-cis-undecaprenyl phosphate + phosphate + H(+). Its function is as follows. Catalyzes the dephosphorylation of undecaprenyl diphosphate (UPP). Confers resistance to bacitracin. In Verminephrobacter eiseniae (strain EF01-2), this protein is Undecaprenyl-diphosphatase.